The sequence spans 290 residues: ATP synthase subunit a (290 aa).

7 helical membrane passes run 54-74 (AVHL…ILLF), 115-135 (IAPL…LKWI), 136-156 (PVDY…KIVP), 164-184 (FGLS…VKGF), 201-221 (LVPF…LSLA), 233-253 (VVFI…NVPW), and 254-274 (AIFH…LTVV).

Belongs to the ATPase A chain family. F-type ATPases have 2 components, CF(1) - the catalytic core - and CF(0) - the membrane proton channel. CF(1) has five subunits: alpha(3), beta(3), gamma(1), delta(1), epsilon(1). CF(0) has three main subunits: a(1), b(2) and c(9-12). The alpha and beta chains form an alternating ring which encloses part of the gamma chain. CF(1) is attached to CF(0) by a central stalk formed by the gamma and epsilon chains, while a peripheral stalk is formed by the delta and b chains.

The protein localises to the cell inner membrane. Its function is as follows. Key component of the proton channel; it plays a direct role in the translocation of protons across the membrane. The sequence is that of ATP synthase subunit a from Stutzerimonas stutzeri (strain A1501) (Pseudomonas stutzeri).